A 453-amino-acid polypeptide reads, in one-letter code: Protein amnionless (453 aa).

The N-terminal stretch at 1-19 (MGVLGRVLLWLQLCALTQA) is a signal peptide. Topologically, residues 20-357 (VSKLWVPNTD…ESGAHVWGSS (338 aa)) are extracellular. Asn35 carries N-linked (GlcNAc...) asparagine glycosylation. Cystine bridges form between Cys43–Cys96, Cys137–Cys213, Cys205–Cys211, Cys223–Cys249, Cys234–Cys250, and Cys239–Cys253. Residues 67-87 (SDMLLPLDGELVLASGAGFGV) form an interaction with CUBN region. The region spanning 202–254 (PEDCADPSGCVCGNAEAQPWICAALLQPLGGRCPQAACHSALRPQGQCCDLCG) is the VWFC domain. Residues 358 to 378 (AAGLAGGVAAAVLLALLVLLV) traverse the membrane as a helical segment. Topologically, residues 379-453 (APPLLRRAGR…PLFAGAEAEA (75 aa)) are cytoplasmic.

In terms of assembly, interacts (via extracellular region) with CUBN/cubilin, giving rise to a huge complex containing one AMN chain and three CUBN chains. N-glycosylated. Post-translationally, a soluble form arises by proteolytic removal of the membrane anchor. In terms of tissue distribution, detected in proximal tubules in the kidney cortex (at protein level). Long isoforms are highly expressed in small intestine, colon and kidney (renal proximal tubule epithelial cells). Shorter isoforms are detected at lower levels in testis, thymus and peripheral blood leukocytes.

It is found in the apical cell membrane. The protein localises to the cell membrane. The protein resides in the endosome membrane. Its subcellular location is the membrane. It localises to the coated pit. It is found in the secreted. Its function is as follows. Membrane-bound component of the endocytic receptor formed by AMN and CUBN. Required for normal CUBN glycosylation and trafficking to the cell surface. The complex formed by AMN and CUBN is required for efficient absorption of vitamin B12. Required for normal CUBN-mediated protein transport in the kidney. This Homo sapiens (Human) protein is Protein amnionless (AMN).